A 300-amino-acid polypeptide reads, in one-letter code: MKNLTHLQRLEAEAIYVFREVAATFSNPVMLYSVGKDSSVMLHLAMKAFYPAPPPFPFLHVDTTWKFREMIEFRDAQAREKGFELLVHVNEQGVRDGIGPFTHGSNVHTHIMKTVGLRQALDKYRFDAAFGGARRDEEKSRAKERIFSFRNAQHGWDPKNQRPEMWKIYNTRVSKGESIRVFPLSNWTELDIWQYILQENIPIVPLYFAARRPVVERDGMLIMVDDDRMKLRPGEPVENRLVRFRTLGCYPLTGAIPSSAANLSDIVEEMLIARTSERQGRAIDRDEAGSMEKKKREGYF.

The tract at residues 281–300 (RAIDRDEAGSMEKKKREGYF) is disordered.

The protein belongs to the PAPS reductase family. CysD subfamily. As to quaternary structure, heterodimer composed of CysD, the smaller subunit, and CysN.

The catalysed reaction is sulfate + ATP + H(+) = adenosine 5'-phosphosulfate + diphosphate. Its pathway is sulfur metabolism; hydrogen sulfide biosynthesis; sulfite from sulfate: step 1/3. Its function is as follows. With CysN forms the ATP sulfurylase (ATPS) that catalyzes the adenylation of sulfate producing adenosine 5'-phosphosulfate (APS) and diphosphate, the first enzymatic step in sulfur assimilation pathway. APS synthesis involves the formation of a high-energy phosphoric-sulfuric acid anhydride bond driven by GTP hydrolysis by CysN coupled to ATP hydrolysis by CysD. In Brucella abortus (strain 2308), this protein is Sulfate adenylyltransferase subunit 2.